We begin with the raw amino-acid sequence, 261 residues long: ATP synthase subunit a (261 aa).

Helical transmembrane passes span 28–48, 89–109, 140–160, 203–223, and 229–249; these read AVHLDSLGWSVFLGLVFLTIF, IAPLSLTIFVWILLMNSMDWV, NITFGLALGVFILIIYYSIKV, LFGNLYAGELIFLLIATIGVF, and FLWAAFHLLVIPLQAFIFMML.

It belongs to the ATPase A chain family. As to quaternary structure, F-type ATPases have 2 components, CF(1) - the catalytic core - and CF(0) - the membrane proton channel. CF(1) has five subunits: alpha(3), beta(3), gamma(1), delta(1), epsilon(1). CF(0) has three main subunits: a(1), b(2) and c(9-12). The alpha and beta chains form an alternating ring which encloses part of the gamma chain. CF(1) is attached to CF(0) by a central stalk formed by the gamma and epsilon chains, while a peripheral stalk is formed by the delta and b chains.

Its subcellular location is the cell inner membrane. Key component of the proton channel; it plays a direct role in the translocation of protons across the membrane. The sequence is that of ATP synthase subunit a from Colwellia psychrerythraea (strain 34H / ATCC BAA-681) (Vibrio psychroerythus).